We begin with the raw amino-acid sequence, 557 residues long: Organic cation/carnitine transporter 2 (557 aa).

The Cytoplasmic portion of the chain corresponds to 1–20; it reads MRDYDEVTAFLGEWGPFQRL. The helical transmembrane segment at 21–41 threads the bilayer; sequence IFFLLSASIIPNGFTGLSSVF. Topologically, residues 42-142 are extracellular; it reads LIATPEHRCR…NLVCEDDWKA (101 aa). N-linked (GlcNAc...) asparagine glycans are attached at residues Asn57, Asn64, and Asn91. A helical transmembrane segment spans residues 143–163; that stretch reads PLTISLFFVGVLLGSFISGQL. The Cytoplasmic portion of the chain corresponds to 164-172; sequence SDRFGRKNV. A helical transmembrane segment spans residues 173–193; sequence LFVTMGMQTGFSFLQIFSKNF. Topologically, residues 194 to 197 are extracellular; the sequence is EMFV. The helical transmembrane segment at 198 to 218 threads the bilayer; it reads VLFVLVGMGQISNYVAAFVLG. 218–225 serves as a coordination point for ATP; that stretch reads GTEILGKS. Residues 219–232 lie on the Cytoplasmic side of the membrane; that stretch reads TEILGKSVRIIFST. Residues 233-253 form a helical membrane-spanning segment; it reads LGVCIFYAFGYMVLPLFAYFI. The Extracellular segment spans residues 254-257; it reads RDWR. Residues 258-278 form a helical membrane-spanning segment; that stretch reads MLLVALTMPGVLCVALWWFIP. The Cytoplasmic segment spans residues 279-341; sequence ESPRWLISQG…LDLLRTWNIR (63 aa). Residues 342–362 traverse the membrane as a helical segment; the sequence is MVTIMSIMLWMTISVGYFGLS. Over 363–373 the chain is Extracellular; the sequence is LDTPNLHGDIF. The chain crosses the membrane as a helical span at residues 374–394; it reads VNCFLSAMVEVPAYVLAWLLL. Residues 395-406 lie on the Cytoplasmic side of the membrane; it reads QYLPRRYSMATA. Residues 407–427 traverse the membrane as a helical segment; it reads LFLGGSVLLFMQLVPPDLYYL. Residues 428 to 430 are Extracellular-facing; that stretch reads ATV. The helical transmembrane segment at 431–451 threads the bilayer; the sequence is LVMVGKFGVTAAFSMVYVYTA. At 452-462 the chain is on the cytoplasmic side; sequence ELYPTVVRNMG. Residues 463–483 form a helical membrane-spanning segment; it reads VGVSSTASRLGSILSPYFVYL. Residues 484 to 488 lie on the Extracellular side of the membrane; sequence GAYDR. Residue Tyr486 is modified to Phosphotyrosine. The helical transmembrane segment at 489–509 threads the bilayer; it reads FLPYILMGSLTILTAILTLFL. A disordered region spans residues 535-557; sequence TPSHTRMLKDGQERPTILKSTAF. A Phosphothreonine modification is found at Thr550.

The protein belongs to the major facilitator (TC 2.A.1) superfamily. Organic cation transporter (TC 2.A.1.19) family. In terms of assembly, interacts with PDZK1. Glycosylated. Glycosylation affects the expression levels. Post-translationally, not glycosylated. In terms of tissue distribution, strongly expressed in kidney, skeletal muscle, heart and placenta. Primarily expressed by surface epithelial cells of the colon (at protein level). Expressed in CD68 macrophage and CD43 T-cells but not in CD20 B-cells. In testis, localized to Sertoli cell basal membranes, peritubular myoid cells and Leydig cells.

Its subcellular location is the cell membrane. It localises to the apical cell membrane. The protein localises to the basal cell membrane. The protein resides in the endoplasmic reticulum. It catalyses the reaction (R)-carnitine(out) + Na(+)(out) = (R)-carnitine(in) + Na(+)(in). It carries out the reaction glycine betaine(out) + Na(+)(out) = glycine betaine(in) + Na(+)(in). The enzyme catalyses glycine betaine(out) + (R)-carnitine(in) = glycine betaine(in) + (R)-carnitine(out). The catalysed reaction is O-butanoyl-(R)-carnitine(out) + Na(+)(out) = O-butanoyl-(R)-carnitine(in) + Na(+)(in). It catalyses the reaction O-acetyl-(R)-carnitine(out) + Na(+)(out) = O-acetyl-(R)-carnitine(in) + Na(+)(in). It carries out the reaction O-propanoyl-(R)-carnitine(out) + Na(+)(out) = O-propanoyl-(R)-carnitine(in) + Na(+)(in). The enzyme catalyses (S)-carnitine(out) + Na(+)(out) = (S)-carnitine(in) + Na(+)(in). The catalysed reaction is an O-acyl-(R)-carnitine(out) + Na(+)(out) = an O-acyl-(R)-carnitine(in) + Na(+)(in). It catalyses the reaction L-glutamyl-L-arginyl-glycyl-L-methionyl-L-threonine(out) + Na(+)(out) = L-glutamyl-L-arginyl-glycyl-L-methionyl-L-threonine(in) + Na(+)(in). It carries out the reaction N,N-dimethylglycine(out) + Na(+)(out) = N,N-dimethylglycine(in) + Na(+)(in). Inhibited by emetine, quinidine and verapamil. The IC(50) of emetine is 4.2 uM. Not inhibited by valproic acid. Transport of (R)-carnitine is stimulated by cholesterol in the plasma membrane. Sodium-ion dependent, high affinity carnitine transporter. Involved in the active cellular uptake of carnitine. Transports one sodium ion with one molecule of carnitine. Also transports organic cations such as tetraethylammonium (TEA) without the involvement of sodium. Relative uptake activity ratio of carnitine to TEA is 11.3. In intestinal epithelia, transports the quorum-sensing pentapeptide CSF (competence and sporulation factor) from B.subtilis which induces cytoprotective heat shock proteins contributing to intestinal homeostasis. May also contribute to regulate the transport of organic compounds in testis across the blood-testis-barrier. In terms of biological role, retained in the ER, unable to perform carnitine uptake. This chain is Organic cation/carnitine transporter 2, found in Homo sapiens (Human).